A 300-amino-acid polypeptide reads, in one-letter code: Transcription termination/antitermination protein NusG (300 aa).

A disordered region spans residues 1-99 (MSDPNVNDAI…EAEEPELDPI (99 aa)). Composition is skewed to acidic residues over residues 14-41 (ESVE…EAAD) and 47-97 (ETDE…PELD).

This sequence belongs to the NusG family.

In terms of biological role, participates in transcription elongation, termination and antitermination. This is Transcription termination/antitermination protein NusG from Streptomyces coelicolor (strain ATCC BAA-471 / A3(2) / M145).